The chain runs to 199 residues: Guanylyl cyclase-activating protein 1 (199 aa).

The N-myristoyl glycine moiety is linked to residue glycine 2. Residue asparagine 3 is modified to Deamidated asparagine. 4 EF-hand domains span residues 13 to 48 (SATECHQWYKKFMTECPSGQLTLYEFKQFFGLKNLS), 50 to 85 (SANKYVEQMFETFDFNKDGYIDFMEYVAALSLVLKG), 86 to 121 (KVDQKLRWYFKLYDVDGNGCIDRGELLNIIKAIRAI), and 129 to 164 (TAEEFTNMVFDKIDINGDGELSLEEFMEGVQKDEVL). Ca(2+) contacts are provided by aspartate 63, asparagine 65, aspartate 67, tyrosine 69, glutamate 74, aspartate 99, aspartate 101, asparagine 103, cysteine 105, glutamate 110, aspartate 142, asparagine 144, aspartate 146, glutamate 148, and glutamate 153.

In terms of tissue distribution, retina, in rod and cone outer segments, and pineal gland.

Stimulates retinal guanylyl cyclase when free calcium ions concentration is low and inhibits guanylyl cyclase when free calcium ions concentration is elevated. This Ca(2+)-sensitive regulation of retinal guanylyl cyclase is a key event in recovery of the dark state of rod photoreceptors following light exposure. The polypeptide is Guanylyl cyclase-activating protein 1 (GUCA1A) (Gallus gallus (Chicken)).